Reading from the N-terminus, the 492-residue chain is N-succinylglutamate 5-semialdehyde dehydrogenase (492 aa).

220 to 225 (GSASTG) contributes to the NAD(+) binding site. Active-site residues include Glu-243 and Cys-277.

This sequence belongs to the aldehyde dehydrogenase family. AstD subfamily.

The catalysed reaction is N-succinyl-L-glutamate 5-semialdehyde + NAD(+) + H2O = N-succinyl-L-glutamate + NADH + 2 H(+). Its pathway is amino-acid degradation; L-arginine degradation via AST pathway; L-glutamate and succinate from L-arginine: step 4/5. Functionally, catalyzes the NAD-dependent reduction of succinylglutamate semialdehyde into succinylglutamate. The protein is N-succinylglutamate 5-semialdehyde dehydrogenase of Salmonella gallinarum (strain 287/91 / NCTC 13346).